The chain runs to 89 residues: Small ribosomal subunit protein uS17 (89 aa).

Belongs to the universal ribosomal protein uS17 family. As to quaternary structure, part of the 30S ribosomal subunit.

In terms of biological role, one of the primary rRNA binding proteins, it binds specifically to the 5'-end of 16S ribosomal RNA. In Albidiferax ferrireducens (strain ATCC BAA-621 / DSM 15236 / T118) (Rhodoferax ferrireducens), this protein is Small ribosomal subunit protein uS17.